The sequence spans 169 residues: MIGMNLQLVCLTLLAFSSWSLCSDSEEDVRALEADLLTNMHASKVSKGSPPSWKMTLLNVCSLINNLNSAAEEAGEMRDDDLVAKRKLPLVLDDFSLEALLTVFQLQKICRSRAFQHWEIIQEDILDHGNEKTEKEEVIKRKIPYILKRQLYENKPRRPYILKRASYYY.

A signal peptide spans 1–22; it reads MIGMNLQLVCLTLLAFSSWSLC.

It belongs to the neurotensin family. As to quaternary structure, interacts with NTSR1. Interacts with SORT1. Interacts with SORL1. Neurotensin is cleaved and degraded by Angiotensin-converting enzyme (ACE) and neprilysin (MME).

It is found in the secreted. The protein localises to the cytoplasmic vesicle. The protein resides in the secretory vesicle. In terms of biological role, neurotensin may play an endocrine or paracrine role in the regulation of fat metabolism. It causes contraction of smooth muscle. The protein is Neurotensin/neuromedin N (Nts) of Rattus norvegicus (Rat).